The following is a 203-amino-acid chain: Small ribosomal subunit protein uS4c (203 aa).

The disordered stretch occupies residues 15 to 42 (LGALPGLTSKRPRAGSDPRNQELSGNKS). Residues 89–150 (MRLDNILFRL…DQKSKAMIQN (62 aa)) form the S4 RNA-binding domain.

It belongs to the universal ribosomal protein uS4 family. In terms of assembly, part of the 30S ribosomal subunit. Contacts protein S5. The interaction surface between S4 and S5 is involved in control of translational fidelity.

The protein localises to the plastid. It is found in the chloroplast. One of the primary rRNA binding proteins, it binds directly to 16S rRNA where it nucleates assembly of the body of the 30S subunit. Functionally, with S5 and S12 plays an important role in translational accuracy. This chain is Small ribosomal subunit protein uS4c (rps4), found in Oenothera elata subsp. hookeri (Hooker's evening primrose).